We begin with the raw amino-acid sequence, 100 residues long: A-type ATP synthase subunit F (100 aa).

Belongs to the V-ATPase F subunit family. Has multiple subunits with at least A(3), B(3), C, D, E, F, H, I and proteolipid K(x).

It is found in the cell membrane. In terms of biological role, component of the A-type ATP synthase that produces ATP from ADP in the presence of a proton gradient across the membrane. This Methanospirillum hungatei JF-1 (strain ATCC 27890 / DSM 864 / NBRC 100397 / JF-1) protein is A-type ATP synthase subunit F.